A 198-amino-acid polypeptide reads, in one-letter code: Guanine nucleotide-binding protein subunit alpha-11 (198 aa).

The interval 1-11 is G1 motif; that stretch reads LLGTGESGKST. Residues 1-198 form the G-alpha domain; sequence LLGTGESGKS…LSEYDHVLVE (198 aa). GTP is bound by residues 3–10 and 137–140; these read GTGESGKS and LRVR. Position 10 (Ser-10) interacts with Mg(2+). Positions 135-143 are G2 motif; the sequence is DVLRVRVPT. Mg(2+) is bound at residue Thr-143. The tract at residues 158-167 is G3 motif; sequence FRMVDVGGQR.

The protein belongs to the G-alpha family. G(q) subfamily. G proteins are composed of 3 units; alpha, beta and gamma. The alpha chain contains the guanine nucleotide binding site. Interacts with RGS22. Interacts with NTSR1.

Its subcellular location is the cell membrane. It is found in the cytoplasm. The catalysed reaction is GTP + H2O = GDP + phosphate + H(+). In terms of biological role, guanine nucleotide-binding proteins (G proteins) function as transducers downstream of G protein-coupled receptors (GPCRs) in numerous signaling cascades. The alpha chain contains the guanine nucleotide binding site and alternates between an active, GTP-bound state and an inactive, GDP-bound state. Signaling by an activated GPCR promotes GDP release and GTP binding. The alpha subunit has a low GTPase activity that converts bound GTP to GDP, thereby terminating the signal. Both GDP release and GTP hydrolysis are modulated by numerous regulatory proteins. Signaling is mediated via phospholipase C-beta-dependent inositol lipid hydrolysis for signal propagation: activates phospholipase C-beta: following GPCR activation, GNA11 activates PLC-beta (PLCB1, PLCB2, PLCB3 or PLCB4), leading to production of diacylglycerol (DAG) and inositol 1,4,5-trisphosphate (IP3). Transduces FFAR4 signaling in response to long-chain fatty acids (LCFAs). Together with GNAQ, required for heart development. In the respiratory epithelium, transmits OXGR1-dependent signals that lead to downstream intracellular Ca(2+) release and mucocilliary clearance of airborne pathogens. The protein is Guanine nucleotide-binding protein subunit alpha-11 (GNA11) of Canis lupus familiaris (Dog).